The sequence spans 407 residues: Proteasome-activating nucleotidase (407 aa).

Residues 22–67 (KEKTQIAELESKVLRLELKNKDISRENVQIKKENEILKRELDKLRI) adopt a coiled-coil conformation. ATP-binding positions include 192–197 (GTGKTL) and His-331. Residues 405–407 (MYG) form a docks into pockets in the proteasome alpha-ring to cause gate opening region.

The protein belongs to the AAA ATPase family. In terms of assembly, homohexamer. The hexameric complex has a two-ring architecture resembling a top hat that caps the 20S proteasome core at one or both ends. Upon ATP-binding, the C-terminus of PAN interacts with the alpha-rings of the proteasome core by binding to the intersubunit pockets.

The protein resides in the cytoplasm. Its function is as follows. ATPase which is responsible for recognizing, binding, unfolding and translocation of substrate proteins into the archaeal 20S proteasome core particle. Is essential for opening the gate of the 20S proteasome via an interaction with its C-terminus, thereby allowing substrate entry and access to the site of proteolysis. Thus, the C-termini of the proteasomal ATPase function like a 'key in a lock' to induce gate opening and therefore regulate proteolysis. Unfolding activity requires energy from ATP hydrolysis, whereas ATP binding alone promotes ATPase-20S proteasome association which triggers gate opening, and supports translocation of unfolded substrates. This is Proteasome-activating nucleotidase from Methanococcus maripaludis (strain C6 / ATCC BAA-1332).